The primary structure comprises 1268 residues: SR-related and CTD-associated factor 8 (1268 aa).

The CID domain maps to Met1–Pro139. Thr6 carries the phosphothreonine modification. Lys18 is covalently cross-linked (Glycyl lysine isopeptide (Lys-Gly) (interchain with G-Cter in SUMO1)). Phosphoserine is present on Ser273. Disordered regions lie at residues Gln322 to Phe355 and Glu385 to Ser469. The segment covering His342–His354 has biased composition (polar residues). The segment covering Val394–Ser443 has biased composition (basic residues). A compositionally biased stretch (basic and acidic residues) spans Ser447 to Lys461. The RRM domain occupies Thr477–Asn551. At Thr615 the chain carries Phosphothreonine. Ser617 carries the post-translational modification Phosphoserine. The segment at Ala753–Ser808 is disordered. A compositionally biased stretch (basic and acidic residues) spans Ala763–Glu774. Arg915, Arg925, and Arg936 each carry asymmetric dimethylarginine. The interval Gln947 to Val1063 is disordered. Pro residues predominate over residues His961–Pro970. Basic and acidic residues-rich tracts occupy residues Glu1009 to Ile1025 and Asp1032 to Val1063. Arg1071 bears the Asymmetric dimethylarginine mark. The segment at Ala1199–Thr1268 is disordered. Positions Gly1249 to Ser1262 are enriched in low complexity.

In terms of assembly, interacts with POLR2A; via C-terminal heptapeptide repeat domain (CTD) phosphorylated at 'Ser-2' and 'Ser-5'. Identified in a complex with CDC5L and other spliceosomal proteins.

The protein resides in the nucleus. It is found in the nucleus matrix. In terms of biological role, anti-terminator protein required to prevent early mRNA termination during transcription. Together with SCAF4, acts by suppressing the use of early, alternative poly(A) sites, thereby preventing the accumulation of non-functional truncated proteins. Mechanistically, associates with the phosphorylated C-terminal heptapeptide repeat domain (CTD) of the largest RNA polymerase II subunit (POLR2A), and subsequently binds nascent RNA upstream of early polyadenylation sites to prevent premature mRNA transcript cleavage and polyadenylation. Independently of SCAF4, also acts as a positive regulator of transcript elongation. The chain is SR-related and CTD-associated factor 8 from Rattus norvegicus (Rat).